A 321-amino-acid chain; its full sequence is PI-PLC X domain-containing protein 3 (321 aa).

Residues 22–197 form the PI-PLC X-box domain; it reads SIHSIPLTNL…DYQVLVFYHS (176 aa). Residues histidine 37 and histidine 114 contribute to the active site.

The polypeptide is PI-PLC X domain-containing protein 3 (PLCXD3) (Bos taurus (Bovine)).